The chain runs to 276 residues: MDIWMAFQALILGIVEGLTEFLPISSTGHLIVVGDLLGFNGETATAFKIIIQLGAILAVMWEFRARVLGVVLGLRSEPRAQRFTFNLLLAFIPAVVFGLAFADLIEHWLFNPITVATALIVGGIIMLWAEKREHAIQAESVDDMTWKLALKVGFAQCLALIPGTSRSGATIIGGLVFGLSRKAATEFSFFLAMPTMIAATVYSLFKYRDILQWSDLPIFAIGFVSTFIVAMITVRALLKFIANHSYAVFAWYRIAFGLVILATWQLHLIDWSTAQP.

The next 7 helical transmembrane spans lie at 12–34, 43–63, 85–105, 108–128, 185–205, 218–238, and 249–269; these read LGIV…IVVG, TATA…MWEF, FNLL…ADLI, WLFN…IMLW, TEFS…YSLF, IFAI…RALL, and FAWY…LHLI.

The protein belongs to the UppP family.

Its subcellular location is the cell inner membrane. The catalysed reaction is di-trans,octa-cis-undecaprenyl diphosphate + H2O = di-trans,octa-cis-undecaprenyl phosphate + phosphate + H(+). Catalyzes the dephosphorylation of undecaprenyl diphosphate (UPP). Confers resistance to bacitracin. The protein is Undecaprenyl-diphosphatase of Ectopseudomonas mendocina (strain ymp) (Pseudomonas mendocina).